The sequence spans 1072 residues: Carbamoyl phosphate synthase large chain (1072 aa).

Residues 1-401 (MPKRLDINTI…SLLKAVRSLE (401 aa)) form a carboxyphosphate synthetic domain region. Residues Arg129, Arg169, Gly175, Gly176, Lys208, Ile210, Glu215, Gly241, Val242, His243, Gln284, and Glu298 each contribute to the ATP site. Residues 133–327 (RTLMQELNEP…IAKLAAKIAV (195 aa)) enclose the ATP-grasp 1 domain. 3 residues coordinate Mg(2+): Gln284, Glu298, and Asn300. 3 residues coordinate Mn(2+): Gln284, Glu298, and Asn300. An oligomerization domain region spans residues 402-546 (LGIYHLELDH…YSTYADENES (145 aa)). The interval 547 to 929 (IVTDRKSVVV…ALYKGLVASG (383 aa)) is carbamoyl phosphate synthetic domain. The region spanning 671–861 (EAALTKLGIP…MANVATKVIL (191 aa)) is the ATP-grasp 2 domain. Residues Arg707, Arg746, Glu752, Gly777, Val778, His779, Ser780, Gln820, and Glu832 each coordinate ATP. The Mg(2+) site is built by Gln820, Glu832, and Asn834. Residues Gln820, Glu832, and Asn834 each coordinate Mn(2+). In terms of domain architecture, MGS-like spans 930 to 1072 (INIPTHGSVI…QTKRHEVVHA (143 aa)). The segment at 930-1072 (INIPTHGSVI…QTKRHEVVHA (143 aa)) is allosteric domain.

This sequence belongs to the CarB family. As to quaternary structure, composed of two chains; the small (or glutamine) chain promotes the hydrolysis of glutamine to ammonia, which is used by the large (or ammonia) chain to synthesize carbamoyl phosphate. Tetramer of heterodimers (alpha,beta)4. Requires Mg(2+) as cofactor. It depends on Mn(2+) as a cofactor.

It carries out the reaction hydrogencarbonate + L-glutamine + 2 ATP + H2O = carbamoyl phosphate + L-glutamate + 2 ADP + phosphate + 2 H(+). The catalysed reaction is hydrogencarbonate + NH4(+) + 2 ATP = carbamoyl phosphate + 2 ADP + phosphate + 2 H(+). It participates in amino-acid biosynthesis; L-arginine biosynthesis; carbamoyl phosphate from bicarbonate: step 1/1. The protein operates within pyrimidine metabolism; UMP biosynthesis via de novo pathway; (S)-dihydroorotate from bicarbonate: step 1/3. Its function is as follows. Large subunit of the glutamine-dependent carbamoyl phosphate synthetase (CPSase). CPSase catalyzes the formation of carbamoyl phosphate from the ammonia moiety of glutamine, carbonate, and phosphate donated by ATP, constituting the first step of 2 biosynthetic pathways, one leading to arginine and/or urea and the other to pyrimidine nucleotides. The large subunit (synthetase) binds the substrates ammonia (free or transferred from glutamine from the small subunit), hydrogencarbonate and ATP and carries out an ATP-coupled ligase reaction, activating hydrogencarbonate by forming carboxy phosphate which reacts with ammonia to form carbamoyl phosphate. In Bacillus cereus (strain AH820), this protein is Carbamoyl phosphate synthase large chain.